A 506-amino-acid polypeptide reads, in one-letter code: MVVREYNEEMKYIERLSPNSFLIKKGFQSNMNVEGIFYANSRLEKLMFDELRNACRPGMTGGFLPGVKQIANVAALPGIVGRSVGLPDIHSGYGFAIGNMAAFDMSDPTSIVSPGGVGFDINCGVRLLRTNLFEKDVQPVKEQLAQSLFDHIPVGVGSKGIIPMNAHDLEEALEMGMDWSLREGYVWAEDKEHCEEYGRMLNADPSKVSLRAKKRGLPQLGTLGAGNHYAEIQVVEEIYDKYAASKMGIEELGQICVMIHSGSRGFGHQVATDALVEMEKAMKRDKIETNDRQLACARINSPEGQNYLKAMSAAANFAWVNRSSMTFLTRQAFAKQFNTTPDDLDMHVIYDVSHNVAKMEEHMVNGRPKQLLVHRKGSTRAFPPHHPLIPVDYQLTGQPVLVGGSMGTCSFVLTGTETGMVETFGSTCHGAGRSLSRAKSRRNLDYKDVLRDLEEKGISIRVASPKLVQEEAPDSYKDVRDVVQTCHDVGISNKAIKLRPIAVIKG.

Asp120, Cys123, His228, His260, and His354 together coordinate Mn(2+). Residue Asn227–Glu231 coordinates GMP. GMP-binding positions include His354 to Asn355, Gly403 to Met406, Ser410, His429 to Gly432, and Lys505. The GMP-histidine intermediate role is filled by His429.

Belongs to the RtcB family. Catalytic component of the tRNA-splicing ligase complex. Mn(2+) serves as cofactor.

The enzyme catalyses a 3'-end 3'-phospho-ribonucleotide-RNA + a 5'-end dephospho-ribonucleoside-RNA + GTP = a ribonucleotidyl-ribonucleotide-RNA + GMP + diphosphate. The catalysed reaction is a 3'-end 2',3'-cyclophospho-ribonucleotide-RNA + a 5'-end dephospho-ribonucleoside-RNA + GTP + H2O = a ribonucleotidyl-ribonucleotide-RNA + GMP + diphosphate + H(+). In terms of biological role, catalytic subunit of the tRNA-splicing ligase complex that acts by directly joining spliced tRNA halves to mature-sized tRNAs by incorporating the precursor-derived splice junction phosphate into the mature tRNA as a canonical 3',5'-phosphodiester. May act as an RNA ligase with broad substrate specificity, and may function toward other RNAs. This chain is RNA-splicing ligase RtcB homolog, found in Anopheles gambiae (African malaria mosquito).